The chain runs to 23 residues: Septenin 2a (23 aa).

In terms of tissue distribution, expressed in skin glands.

The protein resides in the secreted. May act as an antimicrobial peptide. The chain is Septenin 2a from Osteopilus septentrionalis (Cuban treefrog).